Here is a 964-residue protein sequence, read N- to C-terminus: MADFMDIEPSSHSAKASQYESSAPASSSLGNSHPNESLDYYIYDYFVKHNFEEAAQAFLRESKIQIPKSSSSTAFSPSNNNAPSPFPPKNSSLASPSKISESISGDRLYNHMSSAPSPNKKEETNVVHANEDISLDKRQSFGSSSLPPSEVSINVPEGFLVEWFNIFWDVFSARVSRVNSTPIQLYDPSTQRQMARPMSNLQASQPVPSSTFSRSAVVPNPSLPLNPSVLQGQVMNNPTIPKGTPSTSIEGAKTSIPPSHAMQNPHNSFPASADRLQKNHPVQSSNFNPYTPAPSITVPPNYIPNTAMMGPSYSSFGDTDPRTYPAGMGPNPTAARNGFYPPTPAQIHQLKAQQQHLQRQSKQMSEPAPINMKSNKDQQLQYVDFRGVGSGADLQKQQWNKSTSAEGLQPNGLVMRNFGDVRHQKLPTSSPPSQHPPVGQIPSQYLPYQAGLKVPGNTPIPVKQVGGMPLQSPLPVSMKPSADDHSRATPTRSVEAPTLPSYAPRHPTQANGSRYMNPSTSRMTPQSPYMQNYYRPHAQMQDQNNMMSYMLSQQKAMEIAKSREMAIQRNTQTLSSGNQPPQQSGPNPNEFSMSMDPANMQQGNHALSDYHMQLMLLEEQNKKRLMMARQEQGTGSLSPQSYMNSRYSVDVGKEHMSMIPNQTAPMIQPNVPVSANSPAQANTPAADSTKSGTIQPTNRNGEGLSYSPHQQFSPSAPQAEKLSRSMSPFVSQQQQLNQPVSNKPDGLTQNKEVTGMPLNKEELTNPAFPQSRTSWMMPQSFDTSSLNAPGAKDSSSFSSLHAQPGKSGIATMGVADNTIRTTERSTFSEIMKDSPSAHASPGAKTSPNASRAPEPTGGTNSISQDTTQSLQMQSNSVNSSSMVDASKSKEKSGGDTSALDSNAKNEPTAAKPISKLEDDALFNDSAGNAFGFSSKTDSNVEMLNDFDFESFLNDAGADSASVYY.

The tract at residues 1-32 (MADFMDIEPSSHSAKASQYESSAPASSSLGNS) is disordered. Positions 16–32 (ASQYESSAPASSSLGNS) are enriched in low complexity. Residues 34–66 (PNESLDYYIYDYFVKHNFEEAAQAFLRESKIQI) enclose the LisH domain. Residues 69–83 (SSSSTAFSPSNNNAP) show a composition bias toward low complexity. Disordered regions lie at residues 69–125 (SSSS…EETN), 241–273 (PKGT…PASA), 476–523 (VSMK…TSRM), 572–596 (QTLS…MSMD), and 664–914 (APMI…KPIS). 3 stretches are compositionally biased toward polar residues: residues 93 to 103 (LASPSKISESI), 261 to 270 (AMQNPHNSFP), and 508 to 523 (TQAN…TSRM). The segment covering 575–589 (SSGNQPPQQSGPNPN) has biased composition (low complexity). Polar residues-rich tracts occupy residues 664-700 (APMI…TNRN), 707-716 (SPHQQFSPSA), 724-752 (RSMS…QNKE), 767-801 (AFPQ…SSLH), 818-828 (TIRTTERSTFS), and 857-868 (GGTNSISQDTTQ). Residues 869–885 (SLQMQSNSVNSSSMVDA) are compositionally biased toward low complexity. Positions 894–905 (GDTSALDSNAKN) are enriched in polar residues.

The protein belongs to the FLO8 family.

It is found in the cytoplasm. Its subcellular location is the nucleus. Probable transcriptional regulator involved in cell adhesion. The protein is Adhesion defective protein 3 (adn3) of Schizosaccharomyces pombe (strain 972 / ATCC 24843) (Fission yeast).